The chain runs to 2443 residues: Spatacsin (2443 aa).

A Phosphoserine modification is found at Ser1955.

In terms of assembly, interacts with AP5Z1, AP5B1, AP5S1 and ZFYVE26. As to expression, expressed in all structures of brain, with a high expression in cerebellum. Expressed in cortical projection neurons.

It localises to the cytoplasm. The protein localises to the cytosol. The protein resides in the nucleus. Its subcellular location is the cell projection. It is found in the axon. It localises to the dendrite. Functionally, may play a role in neurite plasticity by maintaining cytoskeleton stability and regulating synaptic vesicle transport. The sequence is that of Spatacsin (SPG11) from Homo sapiens (Human).